Reading from the N-terminus, the 191-residue chain is Peptidyl-tRNA hydrolase (191 aa).

Residue tyrosine 17 participates in tRNA binding. The Proton acceptor role is filled by histidine 22. TRNA-binding residues include tyrosine 68, asparagine 70, and asparagine 116.

Belongs to the PTH family. Monomer.

It is found in the cytoplasm. It carries out the reaction an N-acyl-L-alpha-aminoacyl-tRNA + H2O = an N-acyl-L-amino acid + a tRNA + H(+). In terms of biological role, hydrolyzes ribosome-free peptidyl-tRNAs (with 1 or more amino acids incorporated), which drop off the ribosome during protein synthesis, or as a result of ribosome stalling. Functionally, catalyzes the release of premature peptidyl moieties from peptidyl-tRNA molecules trapped in stalled 50S ribosomal subunits, and thus maintains levels of free tRNAs and 50S ribosomes. In Mycobacterium tuberculosis (strain ATCC 25177 / H37Ra), this protein is Peptidyl-tRNA hydrolase.